The primary structure comprises 410 residues: Ribonucleoside-diphosphate reductase small chain (410 aa).

The segment covering 1–20 (MSVQTSPSKQVTSGIQNLNM) has biased composition (polar residues). Disordered stretches follow at residues 1–43 (MSVQ…DEDL) and 55–78 (NANK…ANEP). Basic and acidic residues-rich tracts occupy residues 23–43 (PAKK…DEDL) and 55–65 (NANKKAAEAKK). Residues D146, E177, and H180 each coordinate Fe cation. Y184 is an active-site residue. 3 residues coordinate Fe cation: E240, E274, and H277.

Belongs to the ribonucleoside diphosphate reductase small chain family. As to quaternary structure, heterodimer of a large and a small subunit. The cofactor is Fe cation.

It carries out the reaction a 2'-deoxyribonucleoside 5'-diphosphate + [thioredoxin]-disulfide + H2O = a ribonucleoside 5'-diphosphate + [thioredoxin]-dithiol. Functionally, provides the precursors necessary for DNA synthesis. Catalyzes the biosynthesis of deoxyribonucleotides from the corresponding ribonucleotides. This Neurospora crassa (strain ATCC 24698 / 74-OR23-1A / CBS 708.71 / DSM 1257 / FGSC 987) protein is Ribonucleoside-diphosphate reductase small chain (rnr-2).